The following is a 341-amino-acid chain: Guanine nucleotide-binding protein subunit beta (341 aa).

WD repeat units lie at residues 54-84 (GHLA…IVWD), 96-126 (LRSS…SIYS), 142-171 (GHTG…ALWD), 183-213 (GHTG…KLWD), 225-255 (GHES…RLFD), 269-299 (NIIC…NVWD), and 311-341 (GHDN…KIWN).

Belongs to the WD repeat G protein beta family. In terms of assembly, g proteins are composed of 3 units, alpha, beta and gamma.

In terms of biological role, guanine nucleotide-binding proteins (G proteins) are involved as a modulator or transducer in various transmembrane signaling systems. The beta and gamma chains are required for the GTPase activity, for replacement of GDP by GTP, and for G protein-effector interaction. The protein is Guanine nucleotide-binding protein subunit beta of Lymnaea stagnalis (Great pond snail).